We begin with the raw amino-acid sequence, 181 residues long: Bradykinin-potentiating and C-type natriuretic peptides (181 aa).

A signal peptide spans M1–G23. Residues K24–S30 constitute a propeptide that is removed on maturation. Pyrrolidone carboxylic acid is present on Q31. The propeptide occupies L41 to V43. Q44 bears the Pyrrolidone carboxylic acid mark. Propeptides lie at residues T50–D78 and G90–A157. The interval E74–L153 is disordered. A compositionally biased stretch (low complexity) spans S104 to S114. The span at A140 to A150 shows a compositional bias: gly residues. An intrachain disulfide couples C165 to C181.

It in the N-terminal section; belongs to the bradykinin-potentiating peptide family. This sequence in the C-terminal section; belongs to the natriuretic peptide family. As to expression, venom gland.

Its subcellular location is the secreted. Its function is as follows. Bradykinin-potentiating peptide both inhibits the activity of the angiotensin-converting enzyme (ACE) and enhances the action of bradykinin by inhibiting the peptidases that inactivate it. It acts as an indirect hypotensive agent. In terms of biological role, antagonizes the vasodilatory actions of bradykinin at the B2 bradykinin receptor. Has no demonstrable hypotensive activity when injected intravenously in rats. Functionally, has a vasorelaxant activity in rat aortic strips and a diuretic potency in anesthetized rats. May act by activating natriuretic receptors (NPR1 and/or NPR2). This is Bradykinin-potentiating and C-type natriuretic peptides from Crotalus durissus collilineatus (Brazilian rattlesnake).